Consider the following 105-residue polypeptide: Urease subunit beta (105 aa).

Belongs to the urease beta subunit family. As to quaternary structure, heterotrimer of UreA (gamma), UreB (beta) and UreC (alpha) subunits. Three heterotrimers associate to form the active enzyme.

It is found in the cytoplasm. It carries out the reaction urea + 2 H2O + H(+) = hydrogencarbonate + 2 NH4(+). It participates in nitrogen metabolism; urea degradation; CO(2) and NH(3) from urea (urease route): step 1/1. This Pseudomonas putida (strain W619) protein is Urease subunit beta.